Reading from the N-terminus, the 122-residue chain is Large ribosomal subunit protein uL14c (122 aa).

The protein belongs to the universal ribosomal protein uL14 family. Part of the 50S ribosomal subunit.

It is found in the plastid. The protein localises to the chloroplast. Its function is as follows. Binds to 23S rRNA. The sequence is that of Large ribosomal subunit protein uL14c from Psilotum nudum (Whisk fern).